The chain runs to 835 residues: Serine/threonine-protein kinase TNNI3K (835 aa).

A coiled-coil region spans residues 21-51; that stretch reads SESYVITIERLEDDLQIKEKELTELRNIFGS. ANK repeat units lie at residues 66-96, 100-129, 133-162, 166-195, 199-228, 234-263, 269-298, 304-335, 339-368, and 381-410; these read NGLS…RPSR, NGFT…DIQQ, GGLT…NVNI, VFFT…DVNV, VGDR…KADV, EDHV…EVQP, YGDT…TESL, FSET…NINH, DGHT…DMNL, and DEQT…PQDE. Residues 463–723 form the Protein kinase domain; sequence IEFHEIIGSG…EVVMKLEECL (261 aa). ATP is bound by residues 469–477 and lysine 490; that span reads IGSGSFGKV. The Proton acceptor role is filled by aspartate 588. Low complexity predominate over residues 732–746; the sequence is ASSNSSGSLSPSSSS. The interval 732 to 751 is disordered; sequence ASSNSSGSLSPSSSSDCLVN.

It belongs to the protein kinase superfamily. TKL Ser/Thr protein kinase family. MAP kinase kinase kinase subfamily. Interacts with TNNI3, ACTC1, ACTA1, MYBPC3, AIP, FABP3 and HADHB. The cofactor is Mg(2+). Autophosphorylated. As to expression, highly expressed in both adult and fetal heart.

Its subcellular location is the nucleus. It is found in the cytoplasm. The catalysed reaction is L-seryl-[protein] + ATP = O-phospho-L-seryl-[protein] + ADP + H(+). The enzyme catalyses L-threonyl-[protein] + ATP = O-phospho-L-threonyl-[protein] + ADP + H(+). Its function is as follows. May play a role in cardiac physiology. The chain is Serine/threonine-protein kinase TNNI3K from Homo sapiens (Human).